We begin with the raw amino-acid sequence, 330 residues long: DNA-directed RNA polymerase subunit alpha (330 aa).

Positions 1-236 (MQGSVTEFLK…EQLDAFVDLR (236 aa)) are alpha N-terminal domain (alpha-NTD). Positions 250 to 330 (FDPILLRPVD…NWPPASIAED (81 aa)) are alpha C-terminal domain (alpha-CTD).

It belongs to the RNA polymerase alpha chain family. Homodimer. The RNAP catalytic core consists of 2 alpha, 1 beta, 1 beta' and 1 omega subunit. When a sigma factor is associated with the core the holoenzyme is formed, which can initiate transcription.

It catalyses the reaction RNA(n) + a ribonucleoside 5'-triphosphate = RNA(n+1) + diphosphate. Functionally, DNA-dependent RNA polymerase catalyzes the transcription of DNA into RNA using the four ribonucleoside triphosphates as substrates. The chain is DNA-directed RNA polymerase subunit alpha from Vibrio vulnificus (strain CMCP6).